Here is a 1225-residue protein sequence, read N- to C-terminus: uncharacterized protein (1225 aa).

A signal peptide spans 1-27; that stretch reads MKRFLHRVKWPLLLSSIAVSLGIVAVA. Cys28 is lipidated: N-palmitoyl cysteine. Cys28 carries the S-diacylglycerol cysteine lipid modification. The tract at residues 995–1014 is disordered; sequence QSEKSSSNGGQAQLQSTQSS.

It belongs to the MG307/MG309/MG338 family.

Its subcellular location is the cell membrane. This is an uncharacterized protein from Mycoplasma genitalium (strain ATCC 33530 / DSM 19775 / NCTC 10195 / G37) (Mycoplasmoides genitalium).